Consider the following 396-residue polypeptide: Zinc metalloproteinase nas-19 (396 aa).

The N-terminal stretch at 1–20 (MVRLIHLIGAIILLFSYAYC) is a signal peptide. The Peptidase M12A domain maps to 38 to 231 (RVKRQFERLG…YKINQYYGCW (194 aa)). Residue N79 is glycosylated (N-linked (GlcNAc...) asparagine). Cystine bridges form between C82/C230, C105/C130, C232/C252, and C254/C263. A Zn(2+)-binding site is contributed by H138. The active site involves E139. Residues H142 and H148 each contribute to the Zn(2+) site. The EGF-like domain maps to 225 to 264 (NQYYGCWCSKQLECKNGGYTSPSDCSRCNCPKGFFGNLCD). N-linked (GlcNAc...) asparagine glycosylation occurs at N310.

The cofactor is Zn(2+).

The protein localises to the secreted. Its function is as follows. Metalloprotease. The protein is Zinc metalloproteinase nas-19 (nas-19) of Caenorhabditis elegans.